Here is a 146-residue protein sequence, read N- to C-terminus: Hemoglobin subunit beta (146 aa).

One can recognise a Globin domain in the interval 2–146 (HWTAEEKQLI…VAHALARKYH (145 aa)). Heme b contacts are provided by histidine 63 and histidine 92.

Belongs to the globin family. In terms of assembly, heterotetramer of two alpha chains and two beta chains. Red blood cells.

In terms of biological role, involved in oxygen transport from the lung to the various peripheral tissues. The chain is Hemoglobin subunit beta (HBB) from Chloephaga melanoptera (Andean goose).